A 321-amino-acid chain; its full sequence is Methionyl-tRNA formyltransferase (321 aa).

111-114 provides a ligand contact to (6S)-5,6,7,8-tetrahydrofolate; sequence GLLP.

Belongs to the Fmt family.

The catalysed reaction is L-methionyl-tRNA(fMet) + (6R)-10-formyltetrahydrofolate = N-formyl-L-methionyl-tRNA(fMet) + (6S)-5,6,7,8-tetrahydrofolate + H(+). Attaches a formyl group to the free amino group of methionyl-tRNA(fMet). The formyl group appears to play a dual role in the initiator identity of N-formylmethionyl-tRNA by promoting its recognition by IF2 and preventing the misappropriation of this tRNA by the elongation apparatus. The chain is Methionyl-tRNA formyltransferase from Chlamydia pneumoniae (Chlamydophila pneumoniae).